Consider the following 400-residue polypeptide: Exodeoxyribonuclease 7 large subunit (400 aa).

It belongs to the XseA family. As to quaternary structure, heterooligomer composed of large and small subunits.

The protein resides in the cytoplasm. The enzyme catalyses Exonucleolytic cleavage in either 5'- to 3'- or 3'- to 5'-direction to yield nucleoside 5'-phosphates.. Functionally, bidirectionally degrades single-stranded DNA into large acid-insoluble oligonucleotides, which are then degraded further into small acid-soluble oligonucleotides. The chain is Exodeoxyribonuclease 7 large subunit from Clostridium novyi (strain NT).